Here is a 158-residue protein sequence, read N- to C-terminus: Auxin-responsive protein IAA31 (158 aa).

Over residues Met1–Pro40 the composition is skewed to low complexity. Positions Met1–Pro49 are disordered. The EAR-like (transcriptional repression) signature appears at Leu29–Leu33. Residues Ser72–Arg157 enclose the PB1 domain.

Belongs to the Aux/IAA family. As to quaternary structure, homodimers and heterodimers.

The protein resides in the nucleus. Functionally, aux/IAA proteins are short-lived transcriptional factors that function as repressors of early auxin response genes at low auxin concentrations. Repression is thought to result from the interaction with auxin response factors (ARFs), proteins that bind to the auxin-responsive promoter element (AuxRE). Formation of heterodimers with ARF proteins may alter their ability to modulate early auxin response genes expression. The sequence is that of Auxin-responsive protein IAA31 (IAA31) from Arabidopsis thaliana (Mouse-ear cress).